The sequence spans 182 residues: MASSLMSNAATTMAAATTTAQANMVAPFNGLKSISAFPVTRKNNDITSVASNGGRVQCMVWPPLGMKKFETLSYLPPLSEESLLKEVQYLLNNGWVPCLEFEPTHGFVYREHGNTPGYYDGRYWTMWKLPMFGCTDPSQVVAELEEAKKAYPEAFIRIIGFDNVRQVQCVSFIAYKPASYGA.

The transit peptide at 1–49 (MASSLMSNAATTMAAATTTAQANMVAPFNGLKSISAFPVTRKNNDITSV) directs the protein to the chloroplast.

This sequence belongs to the RuBisCO small chain family. As to quaternary structure, heterohexadecamer of 8 large and 8 small subunits.

It is found in the plastid. The protein resides in the chloroplast. RuBisCO catalyzes two reactions: the carboxylation of D-ribulose 1,5-bisphosphate, the primary event in carbon dioxide fixation, as well as the oxidative fragmentation of the pentose substrate. Both reactions occur simultaneously and in competition at the same active site. Although the small subunit is not catalytic it is essential for maximal activity. In Mesembryanthemum crystallinum (Common ice plant), this protein is Ribulose bisphosphate carboxylase small subunit, chloroplastic 5.